A 457-amino-acid chain; its full sequence is Flavin-containing monooxygenase FMO GS-OX2 (457 aa).

17-22 (GAGAAG) contributes to the FAD binding site. 211 to 216 (GNFASG) contributes to the NADP(+) binding site.

Belongs to the FMO family.

It carries out the reaction a (Z)-omega-(methylsulfanyl)-N-sulfo-alkylhydroximate S-glucoside + NADPH + O2 + H(+) = a (Z)-omega-(methylsulfinyl)-alkyl-glucosinolate + NADP(+) + H2O. Its function is as follows. Catalyzes the conversion of methylthioalkyl glucosinolates of any chain length into methylsulfinylalkyl glucosinolates. This Arabidopsis thaliana (Mouse-ear cress) protein is Flavin-containing monooxygenase FMO GS-OX2 (FMOGS-OX2).